The primary structure comprises 407 residues: Arrestin domain-containing protein 2 (407 aa).

The protein belongs to the arrestin family. In terms of assembly, interacts with WWP1 (via WW domains).

The polypeptide is Arrestin domain-containing protein 2 (Arrdc2) (Mus musculus (Mouse)).